Reading from the N-terminus, the 181-residue chain is Oligoribonuclease (181 aa).

The Exonuclease domain maps to 8 to 171 (LIWIDLEMTG…QDIQESIAEL (164 aa)). The active site involves Tyr129.

This sequence belongs to the oligoribonuclease family.

Its subcellular location is the cytoplasm. 3'-to-5' exoribonuclease specific for small oligoribonucleotides. This is Oligoribonuclease from Shewanella sp. (strain ANA-3).